The chain runs to 294 residues: Cytidine deaminase (294 aa).

CMP/dCMP-type deaminase domains follow at residues 48 to 168 (DEDA…FGPK) and 186 to 294 (LTGD…TLLA). Substrate is bound at residue 89-91 (NME). His102 contacts Zn(2+). The active-site Proton donor is Glu104. The Zn(2+) site is built by Cys129 and Cys132.

The protein belongs to the cytidine and deoxycytidylate deaminase family. As to quaternary structure, homodimer. Zn(2+) is required as a cofactor.

The catalysed reaction is cytidine + H2O + H(+) = uridine + NH4(+). It carries out the reaction 2'-deoxycytidine + H2O + H(+) = 2'-deoxyuridine + NH4(+). Its function is as follows. This enzyme scavenges exogenous and endogenous cytidine and 2'-deoxycytidine for UMP synthesis. The chain is Cytidine deaminase from Enterobacter sp. (strain 638).